The following is a 303-amino-acid chain: MAHYHDDYGKNDEVEFVRTGYGKDMVKVLHIQRDGKYHSIKEVATSVQLTLRSKKDYLHGDNSDIIPTDTIKNTVHVLAKFKGIKSIETFAMNICEHFLSSFSHVTRAHVYVEEVPWKRFEKNGVKHVHAFIHTPTGTHFCDVEQVRNGPPIIHSGIKDLKVLKTTQSGFEGFIKDQFTTLPEVKDRCFATQVYCKWRYQNRDVDFEATWGAVRDIVLKKFAGPYDRGEYSPSVQKTLYDIQVLTLSQLPEIEDMEISLPNIHYFNIDMSKMGLINKEEVLLPLDNPYGKITGTVRRKLPSRL.

Position 2 is an N-acetylalanine (Ala-2). An N6-acetyllysine; alternate mark is found at Lys-10 and Lys-23. An N6-succinyllysine; alternate mark is found at Lys-10 and Lys-23. Lys-23 acts as the Charge relay system in catalysis. Residues Lys-27 and Lys-36 each carry the N6-acetyllysine modification. Residues Ser-39 and Ser-63 each carry the phosphoserine modification. Thr-68 (charge relay system) is an active-site residue. Thr-68 and Asp-69 together coordinate urate. N6-acetyllysine is present on residues Lys-118, Lys-122, and Lys-164. Phe-170 is a urate binding site. N6-acetyllysine occurs at positions 175 and 185. Arg-187 contributes to the urate binding site. Lys-220 carries the post-translational modification N6-acetyllysine; alternate. Lys-220 bears the N6-succinyllysine; alternate mark. Ser-231 bears the Phosphoserine mark. The urate site is built by Val-234, Gln-235, and Asn-261. Residue His-263 is the Charge relay system of the active site. The residue at position 277 (Lys-277) is an N6-acetyllysine. At Tyr-288 the chain carries Phosphotyrosine. Positions 301–303 match the Microbody targeting signal motif; it reads SRL.

This sequence belongs to the uricase family. Expressed in liver. Not detected in other tissues tested.

The protein resides in the peroxisome. The catalysed reaction is urate + O2 + H2O = 5-hydroxyisourate + H2O2. The protein operates within purine metabolism; urate degradation; (S)-allantoin from urate: step 1/3. With respect to regulation, competitively inhibited by xanthine. Catalyzes the oxidation of uric acid to 5-hydroxyisourate, which is further processed to form (S)-allantoin. In Rattus norvegicus (Rat), this protein is Uricase (Uox).